A 271-amino-acid polypeptide reads, in one-letter code: Small ribosomal subunit protein uS2 (271 aa).

Residues 223–271 form a disordered region; the sequence is RALAGSEEGEATEEVTPASEAEKQEVLAEAMSEEGDALQESEVVEEEEK. Acidic residues predominate over residues 253–271; it reads MSEEGDALQESEVVEEEEK.

The protein belongs to the universal ribosomal protein uS2 family.

The chain is Small ribosomal subunit protein uS2 from Wolinella succinogenes (strain ATCC 29543 / DSM 1740 / CCUG 13145 / JCM 31913 / LMG 7466 / NCTC 11488 / FDC 602W) (Vibrio succinogenes).